Here is a 238-residue protein sequence, read N- to C-terminus: MLTRKQQELLLFIHERMKESGVPPSFDEMKDALDLASKSGIHRLITALEERGFIRRLPNRARALEVIKLPEAYAGASQVRRGFSPSVIEGSLGKPAAPPPAPKPAPPAEAASVAVPVMGRIAAGVPISAIQNNMHDISVPVEMIGSGEHYALEIKGDSMIEAGILDGDTVIIRNGSTASPGDIVVALIDDEEATLKRFRRKGASIALEAANPAYETRIFGPDRVKIQGRLVGLIRRYH.

Positions 26-46 (FDEMKDALDLASKSGIHRLIT) form a DNA-binding region, H-T-H motif. Residues Ser158 and Lys196 each act as for autocatalytic cleavage activity in the active site.

This sequence belongs to the peptidase S24 family. As to quaternary structure, homodimer.

The enzyme catalyses Hydrolysis of Ala-|-Gly bond in repressor LexA.. Represses a number of genes involved in the response to DNA damage (SOS response), including recA and lexA. In the presence of single-stranded DNA, RecA interacts with LexA causing an autocatalytic cleavage which disrupts the DNA-binding part of LexA, leading to derepression of the SOS regulon and eventually DNA repair. The chain is LexA repressor from Rhizobium meliloti (strain 1021) (Ensifer meliloti).